A 394-amino-acid chain; its full sequence is Chorismate synthase (394 aa).

R42 and R48 together coordinate NADP(+). Residues 137–139 (RAS), 258–259 (QA), G302, 317–321 (KPIAT), and R343 each bind FMN.

Belongs to the chorismate synthase family. Homotetramer. FMNH2 serves as cofactor.

The catalysed reaction is 5-O-(1-carboxyvinyl)-3-phosphoshikimate = chorismate + phosphate. It functions in the pathway metabolic intermediate biosynthesis; chorismate biosynthesis; chorismate from D-erythrose 4-phosphate and phosphoenolpyruvate: step 7/7. Its function is as follows. Catalyzes the anti-1,4-elimination of the C-3 phosphate and the C-6 proR hydrogen from 5-enolpyruvylshikimate-3-phosphate (EPSP) to yield chorismate, which is the branch point compound that serves as the starting substrate for the three terminal pathways of aromatic amino acid biosynthesis. This reaction introduces a second double bond into the aromatic ring system. The chain is Chorismate synthase from Streptomyces coelicolor (strain ATCC BAA-471 / A3(2) / M145).